Reading from the N-terminus, the 1405-residue chain is MVDLQLHQSLGHHNFTNKLTFYVNGVKRTISNPDPRGTLLDFIRTHEGLTGTKLGCSEGGCGACTVVVASWDREQGEIIYSAVNSCIVPLVAVEGKHLITVEGIGSSNNPHPAQERIALFHGSQCGFCTPGIVMSLYALLRNTGGQPSKEQIAESFDGNLCRCTGYKPIIDAANTFSCGRPGGCCRDNASGKANGAGATVGNGMANGAAAVANGNGAAANGCCKGNGAANGCCKSNGSAATTANGDDKEVDMNKLFTPNGLPLKPYSAKTELIFPPALKKYELNPLFFGNEQKVWFRPVTKLQLLQIKHAYPESKIVGGASEIQIEIKMKAANYNISVYANDIEELKTHKYIPGKGLEFGANISLSKLEEVCDKLVHELDPNVSQIYGAILEQLKYFAGRQIRNAATPAGNIATASPISDLNPVLVAAEAVLTVESIENGEEQISMTDFFVGYRKTKLPAHGVITKIFVPETVPRNEVVMAYKQAKRKDDDIAIVTACLRLALDDDFRISKARLAYGGVGPFTTAAKGTAEFLTGKLLRRETAKEVLEGAIDCLIKEFDLPYSVPGGMAAYRRTLIMSFFYKFYSTVLEKIGLAGEAQDNSALENTYDPQALLEVTRKHPVGSRDLTNPYEQRIVGKSDPHLSALKQVTGEAVYIDDIPPYHGECFGVQVMSTKPRARILSVDPSPALEVEGVVGYVDVNDLPSREANIWGPTPVGKEPFFADGEVYYVGQCIGVIIATDRMIAEEAARLVKVEYEELETVITIEEAIEAQSFFDYQPKAEKGDVDGAFAESAYTFEGTSRIGSQEHFYLETQGSLVVPEPEDGEMKVYSSSQNPTETQVFVAQATGVPSSRIVARVKRLGGGFGGKESRCCHLSSIAAVAAKKYKRPVRMILSRSEDMLTAGQRHPFVMKWKVGLDKNYKFTALEAKLYANAGWSMDLTKGVIERAVLHAENCYDFPNARIQGIPCRTSVASNTAFRGFGGPQGMFMAECYIYEIADQLGIEPDTLREINYLVPGVSSTPFKQAITEDFTVPDMVKQIKKQSNYDDLRRQVEEFNSKHKWIKRGLAHVPTMFGISFGATFLNQAGALVHIYHDGSILLTHGGTEMGQGLHTKMAMVCAEELKVPLSQVFISETSTNTVPNTSASAASASSDLNGMAVKHACDQLNERLAPYRERLGENATMEQLAHAAYFDRVNLSANGFYKTPDIGFVWGDPNPKPAFFYFTQGCAVAMVEVNTLTGDWSNLRTDIVMDIGRPINQAIDYGQIEGAFVQGQGLFTIEESLWLRNGALFTRGPGAYKIPGFRDIPQEFNVGHLRDRPFKHLKTIHRSKGIGEPPLFLGSSVFFAIRDALSYARRQNLGEATMPAGLVAPMTTERIRMLAGDSLYEHKGKIEPTEGDDKPFFVNA.

Positions 17-104 constitute a 2Fe-2S ferredoxin-type domain; it reads NKLTFYVNGV…GKHLITVEGI (88 aa). Positions 56, 61, 64, 86, 125, 128, 161, and 163 each coordinate [2Fe-2S] cluster. The region spanning 288–474 is the FAD-binding PCMH-type domain; the sequence is FGNEQKVWFR…TKIFVPETVP (187 aa). Residues 316–323, phenylalanine 397, 407–411, aspartate 420, isoleucine 464, and lysine 483 each bind FAD; these read IVGGASEI and TPAGN. Residues glutamine 833 and phenylalanine 864 each contribute to the Mo-molybdopterin site. Substrate is bound by residues glutamate 868 and arginine 946. Arginine 978 is a binding site for Mo-molybdopterin. A substrate-binding site is contributed by phenylalanine 980. Alanine 1147 contributes to the Mo-molybdopterin binding site. The active-site Proton acceptor is the glutamate 1333.

This sequence belongs to the xanthine dehydrogenase family. As to quaternary structure, homodimer. Mo-molybdopterin serves as cofactor. Requires [2Fe-2S] cluster as cofactor. The cofactor is FAD.

The protein resides in the cytoplasm. The enzyme catalyses hypoxanthine + NAD(+) + H2O = xanthine + NADH + H(+). The catalysed reaction is xanthine + NAD(+) + H2O = urate + NADH + H(+). The protein operates within purine metabolism. Completely inhibited by allopurinol and significantly inhibited by adenine. Inhibited by Fe(2+), Cd(2+) and Zn(2+) and strongly inhibited by Cu(2+). Mg(2+) and Mo(2+) have no effect on activity. Functionally, key enzyme in purine degradation. Catalyzes the oxidation of hypoxanthine to xanthine. Catalyzes the oxidation of xanthine to uric acid. Oxidizes xanthine, hypoxanthine and pterine at high rates. Can also act on purine and guanine. The polypeptide is Xanthine dehydrogenase (Blastobotrys adeninivorans (Yeast)).